Reading from the N-terminus, the 106-residue chain is uncharacterized protein (106 aa).

Disordered stretches follow at residues phenylalanine 33–aspartate 64 and asparagine 87–lysine 106. Positions aspartate 52 to asparagine 63 are enriched in basic and acidic residues. A compositionally biased stretch (polar residues) spans asparagine 87–proline 99.

The protein resides in the mitochondrion. This is an uncharacterized protein from Arabidopsis thaliana (Mouse-ear cress).